Reading from the N-terminus, the 610-residue chain is Elongation factor 4 (610 aa).

The tr-type G domain occupies 11–193; it reads EKIRNFSIIA…QIVEKVPAPT (183 aa). Residues 23-28 and 140-143 each bind GTP; these read DHGKST and NKID.

It belongs to the TRAFAC class translation factor GTPase superfamily. Classic translation factor GTPase family. LepA subfamily.

The protein localises to the cell membrane. The catalysed reaction is GTP + H2O = GDP + phosphate + H(+). In terms of biological role, required for accurate and efficient protein synthesis under certain stress conditions. May act as a fidelity factor of the translation reaction, by catalyzing a one-codon backward translocation of tRNAs on improperly translocated ribosomes. Back-translocation proceeds from a post-translocation (POST) complex to a pre-translocation (PRE) complex, thus giving elongation factor G a second chance to translocate the tRNAs correctly. Binds to ribosomes in a GTP-dependent manner. In Streptococcus agalactiae serotype Ia (strain ATCC 27591 / A909 / CDC SS700), this protein is Elongation factor 4.